The primary structure comprises 197 residues: GTP cyclohydrolase 1 (197 aa).

Cys88, His91, and Cys160 together coordinate Zn(2+).

The protein belongs to the GTP cyclohydrolase I family. As to quaternary structure, homomer.

It carries out the reaction GTP + H2O = 7,8-dihydroneopterin 3'-triphosphate + formate + H(+). Its pathway is cofactor biosynthesis; 7,8-dihydroneopterin triphosphate biosynthesis; 7,8-dihydroneopterin triphosphate from GTP: step 1/1. The sequence is that of GTP cyclohydrolase 1 from Clostridium beijerinckii (strain ATCC 51743 / NCIMB 8052) (Clostridium acetobutylicum).